Here is a 102-residue protein sequence, read N- to C-terminus: NADH-quinone oxidoreductase subunit K (102 aa).

3 consecutive transmembrane segments (helical) span residues 6–26 (MEHG…GLLI), 30–50 (LLYI…AFVV), and 65–85 (ILVI…LLLL).

Belongs to the complex I subunit 4L family. In terms of assembly, NDH-1 is composed of 13 different subunits. Subunits NuoA, H, J, K, L, M, N constitute the membrane sector of the complex.

The protein resides in the cell inner membrane. The catalysed reaction is a quinone + NADH + 5 H(+)(in) = a quinol + NAD(+) + 4 H(+)(out). NDH-1 shuttles electrons from NADH, via FMN and iron-sulfur (Fe-S) centers, to quinones in the respiratory chain. The immediate electron acceptor for the enzyme in this species is believed to be ubiquinone. Couples the redox reaction to proton translocation (for every two electrons transferred, four hydrogen ions are translocated across the cytoplasmic membrane), and thus conserves the redox energy in a proton gradient. The polypeptide is NADH-quinone oxidoreductase subunit K (Shewanella oneidensis (strain ATCC 700550 / JCM 31522 / CIP 106686 / LMG 19005 / NCIMB 14063 / MR-1)).